The primary structure comprises 116 residues: Large ribosomal subunit protein bL19 (116 aa).

It belongs to the bacterial ribosomal protein bL19 family.

In terms of biological role, this protein is located at the 30S-50S ribosomal subunit interface and may play a role in the structure and function of the aminoacyl-tRNA binding site. This chain is Large ribosomal subunit protein bL19, found in Magnetococcus marinus (strain ATCC BAA-1437 / JCM 17883 / MC-1).